The primary structure comprises 191 residues: Reticulon-like protein B15 (191 aa).

The region spanning 13-191 (VADLCLWKDK…SKIPRAPKVE (179 aa)) is the Reticulon domain. The next 3 membrane-spanning stretches (helical) occupy residues 23-43 (INSGITLVMATLFWFLLEFME), 47-67 (VPLLCSILLLLMLILFLWAKF), and 122-142 (VAIIYNIGSYISLLTILYICL).

The protein resides in the endoplasmic reticulum membrane. This Arabidopsis thaliana (Mouse-ear cress) protein is Reticulon-like protein B15 (RTNLB15).